A 105-amino-acid chain; its full sequence is Met repressor (105 aa).

The protein belongs to the MetJ family. Homodimer.

The protein localises to the cytoplasm. Functionally, this regulatory protein, when combined with SAM (S-adenosylmethionine) represses the expression of the methionine regulon and of enzymes involved in SAM synthesis. The chain is Met repressor from Salmonella dublin (strain CT_02021853).